We begin with the raw amino-acid sequence, 74 residues long: MDDIDYIDDINEDSINHMLSTLANVRDPEFSATISLMQEVLKIINSRIIEIDKKYKKNNRNINSMNNASSRVSY.

It belongs to the chordopoxvirinae A30 family. Interacts with protein G7; the interaction stabilizes both proteins. Phosphorylated by viral F10 kinase.

In terms of biological role, required for the association between the dense viroplasm and the viral membranes to form the mature virion (MV). The protein is Protein A30 homolog of Fowlpox virus (strain NVSL) (FPV).